We begin with the raw amino-acid sequence, 131 residues long: UPF0342 protein DSY1594 (131 aa).

It belongs to the UPF0342 family.

The chain is UPF0342 protein DSY1594 from Desulfitobacterium hafniense (strain Y51).